The following is a 208-amino-acid chain: Probable thymidylate kinase (208 aa).

Residue 9–16 (GIDGAGKS) coordinates ATP.

Belongs to the thymidylate kinase family.

The enzyme catalyses dTMP + ATP = dTDP + ADP. The protein is Probable thymidylate kinase of Thermococcus gammatolerans (strain DSM 15229 / JCM 11827 / EJ3).